We begin with the raw amino-acid sequence, 536 residues long: Lysosomal acid glucosylceramidase (536 aa).

A signal peptide spans 1–39 (MELSSPSREECPRPQGRVGIMAASLMGLLLLQAASWASG). 2 cysteine pairs are disulfide-bonded: Cys43-Cys55 and Cys57-Cys62. N-linked (GlcNAc...) asparagine glycosylation is found at Asn58, Asn98, and Asn185. The Proton donor role is filled by Glu274. The N-linked (GlcNAc...) asparagine glycan is linked to Asn309. Catalysis depends on Glu379, which acts as the Nucleophile. Asn501 is a glycosylation site (N-linked (GlcNAc...) asparagine).

It belongs to the glycosyl hydrolase 30 family. In terms of assembly, interacts with saposin-C. Interacts with SCARB2. Interacts with TCP1. Interacts with GRN; this interaction prevents aggregation of GBA1-SCARB2 complex via interaction with HSPA1A upon stress.

It is found in the lysosome membrane. The catalysed reaction is a beta-D-glucosyl-(1&lt;-&gt;1')-N-acylsphing-4-enine + H2O = an N-acylsphing-4-enine + D-glucose. It catalyses the reaction a beta-D-galactosyl-(1&lt;-&gt;1')-N-acylsphing-4-enine + H2O = an N-acylsphing-4-enine + D-galactose. It carries out the reaction cholesteryl 3-beta-D-glucoside + H2O = cholesterol + D-glucose. The enzyme catalyses a beta-D-glucosyl-(1&lt;-&gt;1')-N-acylsphing-4-enine + cholesterol = cholesteryl 3-beta-D-glucoside + an N-acylsphing-4-enine. The catalysed reaction is beta-D-glucosyl-N-(9Z-octadecenoyl)-sphing-4E-enine + cholesterol = N-(9Z-octadecenoyl)-sphing-4-enine + cholesteryl 3-beta-D-glucoside. It catalyses the reaction beta-D-glucosyl-N-octanoylsphing-4E-enine + cholesterol = N-octanoylsphing-4-enine + cholesteryl 3-beta-D-glucoside. It carries out the reaction beta-D-glucosyl-N-dodecanoylsphing-4-enine + cholesterol = N-dodecanoylsphing-4-enine + cholesteryl 3-beta-D-glucoside. The enzyme catalyses beta-D-glucosyl-(1&lt;-&gt;1)-N-octadecanoylsphing-4-enine + cholesterol = N-octadecanoylsphing-4-enine + cholesteryl 3-beta-D-glucoside. The catalysed reaction is beta-D-glucosyl-(1&lt;-&gt;1')-N-(15Z-tetracosenoyl)-sphing-4-enine + cholesterol = N-(15Z-tetracosenoyl)-sphing-4-enine + cholesteryl 3-beta-D-glucoside. It catalyses the reaction a beta-D-galactosyl-(1&lt;-&gt;1')-N-acylsphing-4-enine + cholesterol = cholesteryl 3-beta-D-galactoside + an N-acylsphing-4-enine. It carries out the reaction 1-(beta-D-galactosyl)-N-dodecanoylsphing-4-enine + cholesterol = cholesteryl 3-beta-D-galactoside + N-dodecanoylsphing-4-enine. The enzyme catalyses a beta-D-xylosyl-(1&lt;-&gt;1')-N-acylsphing-4-enine + cholesterol = cholesteryl 3-beta-D-xyloside + an N-acylsphing-4-enine. The catalysed reaction is beta-D-xylosyl-(1&lt;-&gt;1')-N-(9Z-octadecenoyl)-sphing-4-enine + cholesterol = cholesteryl 3-beta-D-xyloside + N-(9Z-octadecenoyl)-sphing-4-enine. Its pathway is steroid metabolism; cholesterol metabolism. It functions in the pathway sphingolipid metabolism. Functionally, glucosylceramidase that catalyzes, within the lysosomal compartment, the hydrolysis of glucosylceramides/GlcCers (such as beta-D-glucosyl-(1&lt;-&gt;1')-N-acylsphing-4-enine) into free ceramides (such as N-acylsphing-4-enine) and glucose. Plays a central role in the degradation of complex lipids and the turnover of cellular membranes. Through the production of ceramides, participates in the PKC-activated salvage pathway of ceramide formation. Catalyzes the glucosylation of cholesterol, through a transglucosylation reaction where glucose is transferred from GlcCer to cholesterol. GlcCer containing mono-unsaturated fatty acids (such as beta-D-glucosyl-N-(9Z-octadecenoyl)-sphing-4-enine) are preferred as glucose donors for cholesterol glucosylation when compared with GlcCer containing same chain length of saturated fatty acids (such as beta-D-glucosyl-N-octadecanoyl-sphing-4-enine). Under specific conditions, may alternatively catalyze the reverse reaction, transferring glucose from cholesteryl 3-beta-D-glucoside to ceramide. Can also hydrolyze cholesteryl 3-beta-D-glucoside producing glucose and cholesterol. Catalyzes the hydrolysis of galactosylceramides/GalCers (such as beta-D-galactosyl-(1&lt;-&gt;1')-N-acylsphing-4-enine), as well as the transfer of galactose between GalCers and cholesterol in vitro, but with lower activity than with GlcCers. Contrary to GlcCer and GalCer, xylosylceramide/XylCer (such as beta-D-xyosyl-(1&lt;-&gt;1')-N-acylsphing-4-enine) is not a good substrate for hydrolysis, however it is a good xylose donor for transxylosylation activity to form cholesteryl 3-beta-D-xyloside. In Sus scrofa (Pig), this protein is Lysosomal acid glucosylceramidase (GBA1).